A 675-amino-acid polypeptide reads, in one-letter code: PML-RARA-regulated adapter molecule 1 (675 aa).

The span at 1-19 (MGSNQDFRNLQAKFQTSQP) shows a compositional bias: polar residues. Disordered stretches follow at residues 1–473 (MGSN…GPIN) and 523–562 (TDDS…PQQL). Basic and acidic residues predominate over residues 23-35 (ELFRKTPKPELNK). Positions 43 to 58 (TELSEQPKKSSQSELS) are enriched in polar residues. Residues 141-150 (PKPEFGELSK) show a composition bias toward basic and acidic residues. 3 stretches are compositionally biased toward polar residues: residues 224 to 242 (RKSQ…SPSK), 251 to 264 (HSPQ…PKNN), and 322 to 331 (LQPSDLTRAS). Position 374 is a phosphoserine (Ser374). Polar residues predominate over residues 407–422 (SECSLPSASAGSSPQC). Residues 462–471 (PAKPALPPGP) show a composition bias toward pro residues. The span at 537 to 546 (LSTQQATRWP) shows a compositional bias: polar residues. Positions 578–656 (KAEREFRKKF…PRTALLPLET (79 aa)) constitute an SH3 domain.

Interacts with SKAP2, LCP2 and DBNL. May interact with LYN. Interacts with NEK6. In terms of processing, may be phosphorylated on tyrosines. Expressed in bone marrow and mature neutrophils. Weakly expressed in macrophages and mast cells.

Its function is as follows. May be involved in integrin signaling in neutrophils. Binds to PtdIns(4)P. This Mus musculus (Mouse) protein is PML-RARA-regulated adapter molecule 1 (Pram1).